Here is a 1001-residue protein sequence, read N- to C-terminus: Integrator complex subunit 7 (1001 aa).

The interval 980-1001 is disordered; sequence DPSKQGAPAPSTSQAVGQTRRF. A compositionally biased stretch (polar residues) spans 989-1001; it reads PSTSQAVGQTRRF.

The protein belongs to the Integrator subunit 7 family. Belongs to the multiprotein complex Integrator, at least composed of IntS1, IntS2, IntS3, IntS4, omd/IntS5, IntS6, defl/IntS7, IntS8, IntS9, IntS10, IntS11, IntS12, asun/IntS13, IntS14 and IntS15. The core complex associates with protein phosphatase 2A subunits mts/PP2A and Pp2A-29B, to form the Integrator-PP2A (INTAC) complex.

The protein localises to the nucleus. It localises to the cytoplasm. Functionally, component of the integrator complex, a multiprotein complex that terminates RNA polymerase II (Pol II) transcription in the promoter-proximal region of genes. The integrator complex provides a quality checkpoint during transcription elongation by driving premature transcription termination of transcripts that are unfavorably configured for transcriptional elongation: the complex terminates transcription by (1) catalyzing dephosphorylation of the C-terminal domain (CTD) of Pol II subunit Polr2A/Rbp1 and Spt5, and (2) degrading the exiting nascent RNA transcript via endonuclease activity. The integrator complex is also involved in the 3'-end processing of the U7 snRNA, and also the spliceosomal snRNAs U1, U2, U4 and U5. The chain is Integrator complex subunit 7 from Drosophila melanogaster (Fruit fly).